The chain runs to 288 residues: ATP synthase gamma chain (288 aa).

The protein belongs to the ATPase gamma chain family. F-type ATPases have 2 components, CF(1) - the catalytic core - and CF(0) - the membrane proton channel. CF(1) has five subunits: alpha(3), beta(3), gamma(1), delta(1), epsilon(1). CF(0) has three main subunits: a, b and c.

The protein resides in the cell inner membrane. Functionally, produces ATP from ADP in the presence of a proton gradient across the membrane. The gamma chain is believed to be important in regulating ATPase activity and the flow of protons through the CF(0) complex. The chain is ATP synthase gamma chain from Rickettsia felis (strain ATCC VR-1525 / URRWXCal2) (Rickettsia azadi).